The chain runs to 280 residues: Protein phosphatase 1 regulatory subunit 3B-A (280 aa).

The short motif at 58 to 61 (RVSF) is the PP1-binding motif element. One can recognise a CBM21 domain in the interval 121-229 (RNRLQADSVC…SNKSLNYKIA (109 aa)).

Interacts with glycogen, PPP1CC catalytic subunit of PP1 and PYGL. Associates with glycogen particles. Forms complexes with debranching enzyme, glycogen phosphorylase, glycogen synthase and phosphorylase kinase which is necessary for its regulation of PP1 activity.

In terms of biological role, acts as a glycogen-targeting subunit for phosphatase PP1. Facilitates interaction of the PP1 with enzymes of the glycogen metabolism and regulates its activity. Suppresses the rate at which PP1 dephosphorylates (inactivates) glycogen phosphorylase and enhances the rate at which it activates glycogen synthase and therefore limits glycogen breakdown. The sequence is that of Protein phosphatase 1 regulatory subunit 3B-A (ppp1r3b-a) from Xenopus laevis (African clawed frog).